The sequence spans 443 residues: MAIYEDKIDLYDANGKLLDENVPLEAISPLKNPTIGKIVNDVKRSVAVNLAGIENSLKKAALGGKANFIPGRELDLDIVENAEIIAEKIKKMVQVDENDDTNVKMINNGQQLLVQVPTIRIERAADYTVSTLVAGAATIQAIIDTFDVDMFDASTVKTAVLGRYPQTVDFTGANVAAMLSPPVLLEGLGYGLRNILTNHIVATTKKNTLNAAALSSILEQTAMFETGDAVGAFERLHLLGLAYQGLNADNLVYDLVKENKKGTVGTVIASLVERAIEDKVIKVSKEMPSGFRVYEPIDWALWNAYAAAGLLAATIVNIGAARAAQGVASTVLYYNDILEYETGLPGVDFGRAEGTAVGFSFFSHSIYGGGGPGIFHGNHVVTRHSKGFALPCVAAAMSLDAGTQMFSPERTSGLVGQVYSEIDYFREPIKYVAEGAAKIKNKI.

Residue Tyr-367 coordinates coenzyme M. Coenzyme B is bound at residue Gly-369.

The protein belongs to the methyl-coenzyme M reductase beta subunit family. MCR is a hexamer of two alpha, two beta, and two gamma chains, forming a dimer of heterotrimers. The cofactor is coenzyme F430.

It catalyses the reaction coenzyme B + methyl-coenzyme M = methane + coenzyme M-coenzyme B heterodisulfide. It participates in one-carbon metabolism; methyl-coenzyme M reduction; methane from methyl-coenzyme M: step 1/1. Component of the methyl-coenzyme M reductase (MCR) I that catalyzes the reductive cleavage of methyl-coenzyme M (CoM-S-CH3 or 2-(methylthio)ethanesulfonate) using coenzyme B (CoB or 7-mercaptoheptanoylthreonine phosphate) as reductant which results in the production of methane and the mixed heterodisulfide of CoB and CoM (CoM-S-S-CoB). This is the final step in methanogenesis. The protein is Methyl-coenzyme M reductase II subunit beta (mrtB) of Methanothermus fervidus (strain ATCC 43054 / DSM 2088 / JCM 10308 / V24 S).